Consider the following 397-residue polypeptide: Acetyl-CoA acetyltransferase, cytosolic (397 aa).

M1 bears the N-acetylmethionine mark. The Acyl-thioester intermediate role is filled by C92. Residue K200 is modified to N6-acetyllysine. CoA-binding residues include R223 and S226. Residues K233 and K235 each carry the N6-acetyllysine modification. S252 serves as a coordination point for CoA. The Proton donor/acceptor role is filled by C383.

It belongs to the thiolase-like superfamily. Thiolase family. Homotetramer.

The protein localises to the cytoplasm. It localises to the cytosol. The catalysed reaction is 2 acetyl-CoA = acetoacetyl-CoA + CoA. It functions in the pathway lipid metabolism; fatty acid metabolism. Its function is as follows. Involved in the biosynthetic pathway of cholesterol. The sequence is that of Acetyl-CoA acetyltransferase, cytosolic (Acat2) from Mus musculus (Mouse).